A 250-amino-acid polypeptide reads, in one-letter code: 3-deoxy-manno-octulosonate cytidylyltransferase (250 aa).

Belongs to the KdsB family.

The protein resides in the cytoplasm. The enzyme catalyses 3-deoxy-alpha-D-manno-oct-2-ulosonate + CTP = CMP-3-deoxy-beta-D-manno-octulosonate + diphosphate. Its pathway is nucleotide-sugar biosynthesis; CMP-3-deoxy-D-manno-octulosonate biosynthesis; CMP-3-deoxy-D-manno-octulosonate from 3-deoxy-D-manno-octulosonate and CTP: step 1/1. It functions in the pathway bacterial outer membrane biogenesis; lipopolysaccharide biosynthesis. In terms of biological role, activates KDO (a required 8-carbon sugar) for incorporation into bacterial lipopolysaccharide in Gram-negative bacteria. This Syntrophobacter fumaroxidans (strain DSM 10017 / MPOB) protein is 3-deoxy-manno-octulosonate cytidylyltransferase.